Here is a 161-residue protein sequence, read N- to C-terminus: 6,7-dimethyl-8-ribityllumazine synthase (161 aa).

Residues phenylalanine 23, 61–63, and 85–87 each bind 5-amino-6-(D-ribitylamino)uracil; these read SFE and AVI. Residue 90 to 91 coordinates (2S)-2-hydroxy-3-oxobutyl phosphate; the sequence is DT. The active-site Proton donor is histidine 93. 5-amino-6-(D-ribitylamino)uracil is bound at residue phenylalanine 118. Arginine 132 contributes to the (2S)-2-hydroxy-3-oxobutyl phosphate binding site.

Belongs to the DMRL synthase family.

It carries out the reaction (2S)-2-hydroxy-3-oxobutyl phosphate + 5-amino-6-(D-ribitylamino)uracil = 6,7-dimethyl-8-(1-D-ribityl)lumazine + phosphate + 2 H2O + H(+). The protein operates within cofactor biosynthesis; riboflavin biosynthesis; riboflavin from 2-hydroxy-3-oxobutyl phosphate and 5-amino-6-(D-ribitylamino)uracil: step 1/2. Its function is as follows. Catalyzes the formation of 6,7-dimethyl-8-ribityllumazine by condensation of 5-amino-6-(D-ribitylamino)uracil with 3,4-dihydroxy-2-butanone 4-phosphate. This is the penultimate step in the biosynthesis of riboflavin. This chain is 6,7-dimethyl-8-ribityllumazine synthase, found in Synechococcus sp. (strain WH7803).